We begin with the raw amino-acid sequence, 484 residues long: Acetyl-coenzyme A carboxylase carboxyl transferase subunit beta, chloroplastic (484 aa).

Residues 223 to 484 (LWIQCDNCYG…LHAFFPLNKN (262 aa)) form the CoA carboxyltransferase N-terminal domain. Residues Cys227, Cys230, Cys243, and Cys246 each contribute to the Zn(2+) site. The C4-type zinc-finger motif lies at 227–246 (CDNCYGLMYKKVKMNVCEQC).

This sequence belongs to the AccD/PCCB family. In terms of assembly, acetyl-CoA carboxylase is a heterohexamer composed of biotin carboxyl carrier protein, biotin carboxylase and 2 subunits each of ACCase subunit alpha and ACCase plastid-coded subunit beta (accD). Zn(2+) serves as cofactor.

It is found in the plastid. The protein localises to the chloroplast stroma. It catalyses the reaction N(6)-carboxybiotinyl-L-lysyl-[protein] + acetyl-CoA = N(6)-biotinyl-L-lysyl-[protein] + malonyl-CoA. The protein operates within lipid metabolism; malonyl-CoA biosynthesis; malonyl-CoA from acetyl-CoA: step 1/1. Component of the acetyl coenzyme A carboxylase (ACC) complex. Biotin carboxylase (BC) catalyzes the carboxylation of biotin on its carrier protein (BCCP) and then the CO(2) group is transferred by the transcarboxylase to acetyl-CoA to form malonyl-CoA. In Olimarabidopsis pumila (Dwarf rocket), this protein is Acetyl-coenzyme A carboxylase carboxyl transferase subunit beta, chloroplastic.